A 224-amino-acid chain; its full sequence is ATP-dependent dethiobiotin synthetase BioD (224 aa).

Residue 12-17 participates in ATP binding; that stretch reads EVGKTV. T16 lines the Mg(2+) pocket. K34 is an active-site residue. T38 is a substrate binding site. ATP contacts are provided by residues D47, 106-109, 166-167, and 196-198; these read EGAG, GS, and PEG. The Mg(2+) site is built by D47 and E106.

The protein belongs to the dethiobiotin synthetase family. As to quaternary structure, homodimer. The cofactor is Mg(2+).

It localises to the cytoplasm. It catalyses the reaction (7R,8S)-7,8-diammoniononanoate + CO2 + ATP = (4R,5S)-dethiobiotin + ADP + phosphate + 3 H(+). It participates in cofactor biosynthesis; biotin biosynthesis; biotin from 7,8-diaminononanoate: step 1/2. Catalyzes a mechanistically unusual reaction, the ATP-dependent insertion of CO2 between the N7 and N8 nitrogen atoms of 7,8-diaminopelargonic acid (DAPA, also called 7,8-diammoniononanoate) to form a ureido ring. This chain is ATP-dependent dethiobiotin synthetase BioD, found in Saccharopolyspora erythraea (strain ATCC 11635 / DSM 40517 / JCM 4748 / NBRC 13426 / NCIMB 8594 / NRRL 2338).